The following is a 161-amino-acid chain: Phosphopantetheine adenylyltransferase (161 aa).

Substrate is bound at residue Thr9. Residues 9–10 (TF) and His17 contribute to the ATP site. The substrate site is built by Lys41, Leu73, and Arg87. ATP-binding positions include 88-90 (GLR), Glu98, and 123-129 (LSYISST).

The protein belongs to the bacterial CoaD family. In terms of assembly, homohexamer. Mg(2+) serves as cofactor.

The protein localises to the cytoplasm. The enzyme catalyses (R)-4'-phosphopantetheine + ATP + H(+) = 3'-dephospho-CoA + diphosphate. The protein operates within cofactor biosynthesis; coenzyme A biosynthesis; CoA from (R)-pantothenate: step 4/5. Its function is as follows. Reversibly transfers an adenylyl group from ATP to 4'-phosphopantetheine, yielding dephospho-CoA (dPCoA) and pyrophosphate. This chain is Phosphopantetheine adenylyltransferase, found in Hahella chejuensis (strain KCTC 2396).